A 1018-amino-acid polypeptide reads, in one-letter code: 2-oxoglutarate dehydrogenase-like, mitochondrial (1018 aa).

Ca(2+)-binding residues include H138, D151, and D153. Thiamine diphosphate is bound by residues R307, D406, N439, I441, and Q671. Residues D406, N439, and I441 each contribute to the Mg(2+) site.

This sequence belongs to the alpha-ketoglutarate dehydrogenase family. In terms of assembly, the OGDHC complex comprises multiple copies of three catalytic enzyme components, the 2-oxoglutarate dehydrogenase (OGDH/E1), the dihydrolipoamide dehydrogenase (DLST/E2) and the dihydrolipoamide dehydrogenase (DLD/E3). OGDHL/E1-like isoenzyme may replace OGDH in the OGDHC complex in the brain. It depends on thiamine diphosphate as a cofactor. The cofactor is Mg(2+).

The protein localises to the mitochondrion matrix. It catalyses the reaction N(6)-[(R)-lipoyl]-L-lysyl-[protein] + 2-oxoglutarate + H(+) = N(6)-[(R)-S(8)-succinyldihydrolipoyl]-L-lysyl-[protein] + CO2. In terms of biological role, 2-oxoglutarate dehydrogenase (E1-like) component of the 2-oxoglutarate dehydrogenase multienzyme complex (OGDHC) which mediates the decarboxylation of alpha-ketoglutarate in the tricarboxylic acid cycle. The OGDHC complex catalyzes the overall conversion of 2-oxoglutarate to succinyl-CoA and CO(2) while reducing NAD(+) to NADH. The OGDHC complex is mainly active in the mitochondrion. Involved in the inhibition of cell proliferation and in apoptosis. This Xenopus laevis (African clawed frog) protein is 2-oxoglutarate dehydrogenase-like, mitochondrial (ogdhl).